The sequence spans 396 residues: D-alanine--D-alanine ligase (396 aa).

In terms of domain architecture, ATP-grasp spans 141-347 (KMLWQAAGLP…PQDLMAQLLS (207 aa)). 174–229 (ETRLGYPLFVKPAQAGSSVGASAVQTRAPLIPAIEAAFQWDEVVLVERYVRAREIE) serves as a coordination point for ATP. Positions 301, 314, and 316 each coordinate Mg(2+). The disordered stretch occupies residues 374-396 (AAHDPDAQGDDWDQRDSNPLPTA).

This sequence belongs to the D-alanine--D-alanine ligase family. Requires Mg(2+) as cofactor. It depends on Mn(2+) as a cofactor.

It is found in the cytoplasm. It carries out the reaction 2 D-alanine + ATP = D-alanyl-D-alanine + ADP + phosphate + H(+). It functions in the pathway cell wall biogenesis; peptidoglycan biosynthesis. Its function is as follows. Cell wall formation. The protein is D-alanine--D-alanine ligase of Treponema pallidum (strain Nichols).